We begin with the raw amino-acid sequence, 138 residues long: Histone H2AX (138 aa).

A disordered region spans residues 1–23 (MSTTGKGGKAKGKTASSKQVSRS). Position 2 is an N-acetylserine (Ser2). An N6-acetyllysine mark is found at Lys6, Lys9, Lys11, Lys13, and Lys18. Ser123 is subject to Phosphoserine. Lys124 is covalently cross-linked (Glycyl lysine isopeptide (Lys-Gly) (interchain with G-Cter in ubiquitin)). 3 positions are modified to phosphoserine: Ser125, Ser130, and Ser135. The short motif at 135–136 (SQ) is the [ST]-Q motif element.

The protein belongs to the histone H2A family. The nucleosome is a histone octamer containing two molecules each of H2A, H2B, H3 and H4 assembled in one H3-H4 heterotetramer and two H2A-H2B heterodimers. The octamer wraps approximately 147 bp of DNA. Post-translationally, monoubiquitination of Lys-124 gives a specific tag for epigenetic transcriptional repression. In terms of processing, phosphorylated to form H2AX134ph (gamma-H2AX) in response to DNA double-strand breaks (DSBs) generated by exogenous genotoxic agents in both the mitotic MIC and the amitotic MAC. Gamma-H2AX is also found when programmed DNA rearrangements occur, namely homologous recombination in the MIC during prophase of meiosis, and chromosome fragmentation and DNA elimination in developing MACs. Gamma-H2AX is important to recover from exogenous DNA damage and to repair breaks associated with normal micronuclear meiosis and mitosis and macronuclear amitotic division. Acetylation occurs almost exclusively in the MAC.

It localises to the nucleus. The protein resides in the chromosome. Functionally, core component of nucleosome which plays a central role in DNA double strand break (DSB) repair. Nucleosomes wrap and compact DNA into chromatin, limiting DNA accessibility to the cellular machineries which require DNA as a template. Histones thereby play a central role in transcription regulation, DNA repair, DNA replication and chromosomal stability. DNA accessibility is regulated via a complex set of post-translational modifications of histones, also called histone code, and nucleosome remodeling. The polypeptide is Histone H2AX (HTA1) (Tetrahymena thermophila (strain SB210)).